A 119-amino-acid polypeptide reads, in one-letter code: Small ribosomal subunit protein bS6 (119 aa).

Residues 96–119 form a disordered region; that stretch reads VTEPSPLARSQEKDEEEGGRTAEA.

This sequence belongs to the bacterial ribosomal protein bS6 family.

In terms of biological role, binds together with bS18 to 16S ribosomal RNA. This chain is Small ribosomal subunit protein bS6, found in Alkalilimnicola ehrlichii (strain ATCC BAA-1101 / DSM 17681 / MLHE-1).